The following is a 249-amino-acid chain: ATP synthase subunit a, chloroplastic (249 aa).

5 consecutive transmembrane segments (helical) span residues 40 to 60 (QVLITSWVVIAILLGSAVIAI), 97 to 117 (VPFIGTLFLFIFVSNWSGALL), 136 to 156 (INTTVALALLTSVAYFYAGLS), 201 to 221 (LVVVVLVSLVPLVVPIPVMFL), and 222 to 242 (GLFTSGIQALIFATLAAAYIG).

This sequence belongs to the ATPase A chain family. In terms of assembly, F-type ATPases have 2 components, CF(1) - the catalytic core - and CF(0) - the membrane proton channel. CF(1) has five subunits: alpha(3), beta(3), gamma(1), delta(1), epsilon(1). CF(0) has four main subunits: a, b, b' and c.

The protein localises to the plastid. It is found in the chloroplast thylakoid membrane. Functionally, key component of the proton channel; it plays a direct role in the translocation of protons across the membrane. This chain is ATP synthase subunit a, chloroplastic, found in Barbarea verna (Land cress).